Here is a 119-residue protein sequence, read N- to C-terminus: uncharacterized protein (119 aa).

A run of 2 helical transmembrane segments spans residues 52–72 (IVLF…VINI) and 88–108 (VLFS…IFLI).

It is found in the membrane. This is an uncharacterized protein from Dictyostelium discoideum (Social amoeba).